A 109-amino-acid chain; its full sequence is MSAQPVDIQIFGRSLRVNCPPEQQDALNMAAVDLNERLQDLKVRTRVTNTEQLVFIAALNVCHELAQERLKTRDYASNMEQRIRMLQQTIEQALLEQGRISERQDAQFE.

The stretch at 71–99 (KTRDYASNMEQRIRMLQQTIEQALLEQGR) forms a coiled coil.

This sequence belongs to the ZapA family. Type 1 subfamily. As to quaternary structure, homodimer. Interacts with FtsZ.

Its subcellular location is the cytoplasm. Its function is as follows. Activator of cell division through the inhibition of FtsZ GTPase activity, therefore promoting FtsZ assembly into bundles of protofilaments necessary for the formation of the division Z ring. It is recruited early at mid-cell but it is not essential for cell division. The sequence is that of Cell division protein ZapA from Serratia proteamaculans (strain 568).